The chain runs to 134 residues: ATP synthase epsilon chain (134 aa).

The protein belongs to the ATPase epsilon chain family. As to quaternary structure, F-type ATPases have 2 components, CF(1) - the catalytic core - and CF(0) - the membrane proton channel. CF(1) has five subunits: alpha(3), beta(3), gamma(1), delta(1), epsilon(1). CF(0) has three main subunits: a, b and c.

It is found in the cell membrane. In terms of biological role, produces ATP from ADP in the presence of a proton gradient across the membrane. This Clostridium botulinum (strain Alaska E43 / Type E3) protein is ATP synthase epsilon chain.